Consider the following 453-residue polypeptide: ATP-dependent protease ATPase subunit HslU (453 aa).

ATP contacts are provided by residues I18, 60 to 65 (GVGKTE), D266, E331, and R403.

The protein belongs to the ClpX chaperone family. HslU subfamily. As to quaternary structure, a double ring-shaped homohexamer of HslV is capped on each side by a ring-shaped HslU homohexamer. The assembly of the HslU/HslV complex is dependent on binding of ATP.

The protein localises to the cytoplasm. Functionally, ATPase subunit of a proteasome-like degradation complex; this subunit has chaperone activity. The binding of ATP and its subsequent hydrolysis by HslU are essential for unfolding of protein substrates subsequently hydrolyzed by HslV. HslU recognizes the N-terminal part of its protein substrates and unfolds these before they are guided to HslV for hydrolysis. In Desulforapulum autotrophicum (strain ATCC 43914 / DSM 3382 / VKM B-1955 / HRM2) (Desulfobacterium autotrophicum), this protein is ATP-dependent protease ATPase subunit HslU.